Here is a 288-residue protein sequence, read N- to C-terminus: ATP synthase subunit a (288 aa).

Helical transmembrane passes span 47–67 (LDSM…FWMV), 104–124 (LIAP…LMDL), 157–177 (DPNI…FYSI), 199–219 (PIVQ…TLIA), 237–257 (LIFI…SVPW), and 258–278 (AIFH…LTIV).

This sequence belongs to the ATPase A chain family. F-type ATPases have 2 components, CF(1) - the catalytic core - and CF(0) - the membrane proton channel. CF(1) has five subunits: alpha(3), beta(3), gamma(1), delta(1), epsilon(1). CF(0) has three main subunits: a(1), b(2) and c(9-12). The alpha and beta chains form an alternating ring which encloses part of the gamma chain. CF(1) is attached to CF(0) by a central stalk formed by the gamma and epsilon chains, while a peripheral stalk is formed by the delta and b chains.

It localises to the cell inner membrane. Its function is as follows. Key component of the proton channel; it plays a direct role in the translocation of protons across the membrane. This chain is ATP synthase subunit a, found in Psychrobacter cryohalolentis (strain ATCC BAA-1226 / DSM 17306 / VKM B-2378 / K5).